A 347-amino-acid chain; its full sequence is Ketol-acid reductoisomerase (NADP(+)) (347 aa).

The 180-residue stretch at 3–182 (TKMFYDKDID…GSGCAGILET (180 aa)) folds into the KARI N-terminal Rossmann domain. NADP(+) contacts are provided by residues 26 to 29 (YGAQ), Arg-49, Ser-53, and 83 to 86 (DELQ). The active site involves His-108. Gly-134 provides a ligand contact to NADP(+). In terms of domain architecture, KARI C-terminal knotted spans 183 to 328 (TFEEETTEDL…KKVRAMMPWI (146 aa)). The Mg(2+) site is built by Asp-191, Glu-195, Glu-227, and Glu-231. Ser-252 is a binding site for substrate.

Belongs to the ketol-acid reductoisomerase family. It depends on Mg(2+) as a cofactor.

It carries out the reaction (2R)-2,3-dihydroxy-3-methylbutanoate + NADP(+) = (2S)-2-acetolactate + NADPH + H(+). The enzyme catalyses (2R,3R)-2,3-dihydroxy-3-methylpentanoate + NADP(+) = (S)-2-ethyl-2-hydroxy-3-oxobutanoate + NADPH + H(+). The protein operates within amino-acid biosynthesis; L-isoleucine biosynthesis; L-isoleucine from 2-oxobutanoate: step 2/4. It functions in the pathway amino-acid biosynthesis; L-valine biosynthesis; L-valine from pyruvate: step 2/4. Functionally, involved in the biosynthesis of branched-chain amino acids (BCAA). Catalyzes an alkyl-migration followed by a ketol-acid reduction of (S)-2-acetolactate (S2AL) to yield (R)-2,3-dihydroxy-isovalerate. In the isomerase reaction, S2AL is rearranged via a Mg-dependent methyl migration to produce 3-hydroxy-3-methyl-2-ketobutyrate (HMKB). In the reductase reaction, this 2-ketoacid undergoes a metal-dependent reduction by NADPH to yield (R)-2,3-dihydroxy-isovalerate. This Leuconostoc mesenteroides subsp. cremoris protein is Ketol-acid reductoisomerase (NADP(+)).